A 1848-amino-acid polypeptide reads, in one-letter code: Histone-lysine N-methyltransferase, H3 lysine-79 specific (1848 aa).

The DOT1 domain occupies 19 to 336 (DVISFAWPLQ…ILERYFQRLK (318 aa)). S-adenosyl-L-methionine-binding positions include 142–145 (YGET), 165–174 (FIDLGSGVGQ), glutamate 192, and 228–229 (DF). Disordered regions lie at residues 338 to 537 (KGGN…TRKA), 558 to 593 (AVSVPSKESSSKEDPPRAASAGPGRKGRMKKGARGR), 886 to 908 (LNSVKNSRRNREHRARSQEWPEV), 960 to 996 (PPPATAPVSIKSSPGHHYKDTTLMPAPKQQQQQQMTL), 1033 to 1075 (LNED…AQSL), 1165 to 1190 (HMASLYPAGQQTTPADLGYQRRRSSV), 1221 to 1333 (QRQQ…TQVS), 1345 to 1374 (QEKLSQHVTPQATPPLPGHGGAPTSGKTIG), 1432 to 1463 (VHVRPLSEESQDPQPTSYAQERGPGLGAGGAA), 1486 to 1508 (ARANAGTAPPATHSSSARSGRDY), 1529 to 1559 (EQQQKQSKGAGSAGSSSLRGPRLNGANPPLE), 1573 to 1604 (KYKEETEERQRRAAAAASSSAGPPAGMELPTH), 1637 to 1713 (SPLA…VDPP), and 1731 to 1757 (QLSHHQQQQQQMLHHHQSQQQQHLQLT). Residues 339 to 360 (GGNDHESVGTVRTTRDRAKREA) are compositionally biased toward basic and acidic residues. Residues 364–373 (QHHHNNHHSN) are compositionally biased toward basic residues. Low complexity predominate over residues 391–405 (ATATAAHQQRHQSQS). Residues 419–428 (SGQQAASKTR) are compositionally biased toward polar residues. Composition is skewed to low complexity over residues 429 to 439 (QQLQHQHNQQQ) and 453 to 474 (DATNGNGGNTTTATNTTSASNG). Serine 491, serine 492, and serine 494 each carry phosphoserine. The segment covering 507–518 (GSNGGSIGGGSV) has biased composition (gly residues). Basic residues-rich tracts occupy residues 526 to 535 (TQKKRKKLTR) and 582 to 593 (RKGRMKKGARGR). A compositionally biased stretch (low complexity) spans 1221–1235 (QRQQMRVEEQQQQQQ). Residues 1236–1263 (HQHHHHHHHHHPQHRLPQHVQHQHPHQH) are compositionally biased toward basic residues. Over residues 1289–1300 (EPPQTQPLELLP) the composition is skewed to low complexity. A phosphoserine mark is found at serine 1318, serine 1324, and serine 1325. A compositionally biased stretch (low complexity) spans 1532 to 1545 (QKQSKGAGSAGSSS). Residues 1574–1583 (YKEETEERQR) show a composition bias toward basic and acidic residues. 2 stretches are compositionally biased toward low complexity: residues 1585–1598 (AAAAASSSAGPPAG) and 1681–1696 (HDATTPSPTPSSSSSS). A compositionally biased stretch (polar residues) spans 1697–1706 (CGRRSNSNNG).

Belongs to the class I-like SAM-binding methyltransferase superfamily. DOT1 family. In terms of tissue distribution, broadly expressed in most tissues. Expressed in a large subset of neurons and in a small subset of glial cells.

It is found in the nucleus. The enzyme catalyses L-lysyl(79)-[histone H3] + 3 S-adenosyl-L-methionine = N(6),N(6),N(6)-trimethyl-L-lysyl(79)-[histone H3] + 3 S-adenosyl-L-homocysteine + 3 H(+). Histone methyltransferase. Methylates 'Lys-79' of histone H3. Required for Polycomb Group (PcG) and trithorax Group (trxG) maintenance of expression. Also involved in telomeric silencing but do not in centric heterochromatin. Probably participates in pairing sensitivity. The polypeptide is Histone-lysine N-methyltransferase, H3 lysine-79 specific (gpp) (Drosophila melanogaster (Fruit fly)).